The chain runs to 94 residues: Large ribosomal subunit protein eL37 (94 aa).

Positions 19, 22, 34, and 37 each coordinate Zn(2+). Residues 19-37 (CRRCGKATYHKQKLRCAAC) form a C4-type zinc finger.

The protein belongs to the eukaryotic ribosomal protein eL37 family. Requires Zn(2+) as cofactor.

The protein resides in the cytoplasm. Binds to the 23S rRNA. This chain is Large ribosomal subunit protein eL37 (RPL37), found in Tetrahymena thermophila (strain SB210).